The following is a 458-amino-acid chain: UDP-N-acetylmuramate--L-alanine ligase (458 aa).

Residue 119-125 (GTHGKTT) coordinates ATP.

This sequence belongs to the MurCDEF family.

It localises to the cytoplasm. The enzyme catalyses UDP-N-acetyl-alpha-D-muramate + L-alanine + ATP = UDP-N-acetyl-alpha-D-muramoyl-L-alanine + ADP + phosphate + H(+). Its pathway is cell wall biogenesis; peptidoglycan biosynthesis. In terms of biological role, cell wall formation. The sequence is that of UDP-N-acetylmuramate--L-alanine ligase from Phocaeicola vulgatus (strain ATCC 8482 / DSM 1447 / JCM 5826 / CCUG 4940 / NBRC 14291 / NCTC 11154) (Bacteroides vulgatus).